We begin with the raw amino-acid sequence, 384 residues long: GTPase Obg (384 aa).

Positions Met-1–Leu-159 constitute an Obg domain. The disordered stretch occupies residues Ala-20–Trp-46. Positions Gly-33 to Gly-43 are enriched in gly residues. The OBG-type G domain maps to Ala-160–Thr-348. GTP contacts are provided by residues Gly-166–Ser-173, Phe-191–His-195, Asp-213–Gly-216, Asn-284–Asp-287, and Ser-329–Leu-331. Ser-173 and Thr-193 together coordinate Mg(2+).

This sequence belongs to the TRAFAC class OBG-HflX-like GTPase superfamily. OBG GTPase family. In terms of assembly, monomer. Requires Mg(2+) as cofactor.

The protein localises to the cytoplasm. Functionally, an essential GTPase which binds GTP, GDP and possibly (p)ppGpp with moderate affinity, with high nucleotide exchange rates and a fairly low GTP hydrolysis rate. Plays a role in control of the cell cycle, stress response, ribosome biogenesis and in those bacteria that undergo differentiation, in morphogenesis control. This Neisseria meningitidis serogroup B (strain ATCC BAA-335 / MC58) protein is GTPase Obg.